Consider the following 673-residue polypeptide: Hemocyanin subunit C (673 aa).

Residues 1-20 (MGAWKVWTFFAIALVVAVKA) form the signal peptide. Cu cation-binding residues include H207, H211, and H237. The N-linked (GlcNAc...) asparagine glycan is linked to N323. The Cu cation site is built by H358, H362, and H398. A disulfide bridge connects residues C568 and C616.

This sequence belongs to the tyrosinase family. Hemocyanin subfamily. In terms of assembly, 36-chain polymer consisting of 6 hexamers, each of which includes 4 different chains, A, B, C and D. As to expression, hemolymph.

It localises to the secreted. The protein resides in the extracellular space. Functionally, hemocyanins are copper-containing oxygen carriers occurring freely dissolved in the hemolymph of many mollusks and arthropods. The polypeptide is Hemocyanin subunit C (HCC) (Scutigera coleoptrata (House centipede)).